We begin with the raw amino-acid sequence, 629 residues long: DNA mismatch repair protein MutL (629 aa).

This sequence belongs to the DNA mismatch repair MutL/HexB family.

Functionally, this protein is involved in the repair of mismatches in DNA. It is required for dam-dependent methyl-directed DNA mismatch repair. May act as a 'molecular matchmaker', a protein that promotes the formation of a stable complex between two or more DNA-binding proteins in an ATP-dependent manner without itself being part of a final effector complex. This chain is DNA mismatch repair protein MutL, found in Haemophilus influenzae (strain 86-028NP).